Consider the following 141-residue polypeptide: Phage-like element PBSX protein XkdS (141 aa).

This sequence to B.subtilis YqbS.

This chain is Phage-like element PBSX protein XkdS (xkdS), found in Bacillus subtilis (strain 168).